The primary structure comprises 483 residues: Probable glycosyltransferase 6 (483 aa).

The Cytoplasmic segment spans residues 1 to 40; that stretch reads MAASETAPFGVSAASKGGGGVAGARAQHGQLAVAGRVHDA. Residues 41–61 traverse the membrane as a helical; Signal-anchor for type II membrane protein segment; sequence LVFAAGAVAAVLVLLATASFL. The Lumenal segment spans residues 62 to 483; the sequence is SPMPVTNLVA…PLPFDYPAAR (422 aa). An N-linked (GlcNAc...) asparagine glycan is attached at Asn-144.

Belongs to the glycosyltransferase 34 family.

Its subcellular location is the golgi apparatus membrane. Its function is as follows. Probable glycosyltransferase that may be involved in the biosynthesis of xyloglucan. In Oryza sativa subsp. indica (Rice), this protein is Probable glycosyltransferase 6.